The sequence spans 104 residues: Large ribosomal subunit protein bL21 (104 aa).

It belongs to the bacterial ribosomal protein bL21 family. Part of the 50S ribosomal subunit. Contacts protein L20.

This protein binds to 23S rRNA in the presence of protein L20. The protein is Large ribosomal subunit protein bL21 of Streptococcus mutans serotype c (strain ATCC 700610 / UA159).